A 209-amino-acid polypeptide reads, in one-letter code: UPF0502 protein PSHAa0076 (209 aa).

The protein belongs to the UPF0502 family.

In Pseudoalteromonas translucida (strain TAC 125), this protein is UPF0502 protein PSHAa0076.